The sequence spans 257 residues: Hydroxyethylthiazole kinase (257 aa).

Met-49 is a binding site for substrate. ATP is bound by residues Arg-124 and Thr-170. A substrate-binding site is contributed by Gly-197.

The protein belongs to the Thz kinase family. It depends on Mg(2+) as a cofactor.

It carries out the reaction 5-(2-hydroxyethyl)-4-methylthiazole + ATP = 4-methyl-5-(2-phosphooxyethyl)-thiazole + ADP + H(+). Its pathway is cofactor biosynthesis; thiamine diphosphate biosynthesis; 4-methyl-5-(2-phosphoethyl)-thiazole from 5-(2-hydroxyethyl)-4-methylthiazole: step 1/1. Functionally, catalyzes the phosphorylation of the hydroxyl group of 4-methyl-5-beta-hydroxyethylthiazole (THZ). This is Hydroxyethylthiazole kinase from Klebsiella pneumoniae (strain 342).